Consider the following 1175-residue polypeptide: MEMEEISENLTASHSIKLTNMWLELLKSVFLSTPQDLPEIILILSLICTVGAFLNMHLKDFPIPLPVILFLIGCCFEILSFASTQIQIYADAIQWMDPDIFFGIFTPVIIFNVAFDMDIYMLQKLFWQILVITIPGFLINYTLILWYLQSVNKLSLKTVPWLLFSAVLISSDPMLTSASIRDLGLSRSLTNLINGESLLTSVLSLVIYSGVVHIRFKSKSVNHTLAHKVMSTAWSYIVESFITGIVFTKVIQLWMATIFGDDVNHITLIFSVLYLIFYVCELVGMSGIFTLATIGLFLNSTSFKPGVEAFLLEFWNCLSFIGFLMVFTFIGLLIPAHTYLHISFSDVYYSLNIYFTLIVLRLLVFLLMSPILSRLGHGFSWRWAFIMVWSEMKGTPNINMALLLAYSDISLGSERERSQILFHGVSVCVITLIVNRFILPMAVTKLGLRDVTSTKYKSVYYTFQHFQELTKSTAMALKFDKDLANADWNMVDNAIILQNPYAMNQEEITEHQKVKCPDCNKEIDETLNIEAMELTNRRLLSAQIASYQRQYRNEVLSQSAVQVLVGAAGSFGEKKGEYMSPENIKNFSESKKLLSFLRKLLLNWVYNTKKDKGVPSRYMFLHACHRIVFTNEFEYTGYLVVLMSTYPMIICWISRLKDIYDNEIKCANYYFLAFYILEALLKVAAMRKEFFSHTWLLFELGITLVGVLDIILIETDSISYNFDLTETVVFMNVIRLLRILRILKLVTPKLLQIIDKRMSQQISFRYSILKGYVQGEMDVLNIIDQIASSKQTKQILLKRVMRNMEHAMKELGYLEYDHPEIAVTMKTKEEINVMLNMAREIVKAFRSKGIIHKVEGTEINKLIMAKKIQVLDLQSVIQPFNVEEAPCNIPWLSEDPEAITFIQEKAKVVTFDCGNNIFEEGDEPEGIYVIISGMVKLKRSKPHLEMERVSAESEIKIHPLPHTEYLLSGEIIGELNCLTKERMQYSATCKTVVETYFIPISHLYEGFEKRCPNMKHKMWQKIGLAITAQKIREHLSFEDWNYKLQLKLCNAFIRDIPKSMKTDIYDETVTHVVLIHGSAEDCQLRKIYKAPFLIPVTCHQIQGMEDFTKVMIIQTSIAVRKFRWNVRKYIPPRRISMKPDSERESFETLDETSEEDNGKKENQENEELIEENINI.

At 1–39 (MEMEEISENLTASHSIKLTNMWLELLKSVFLSTPQDLPE) the chain is on the extracellular side. A helical membrane pass occupies residues 40 to 59 (IILILSLICTVGAFLNMHLK). Over 60–64 (DFPIP) the chain is Cytoplasmic. Residues 65–82 (LPVILFLIGCCFEILSFA) form a helical membrane-spanning segment. The Extracellular segment spans residues 83–98 (STQIQIYADAIQWMDP). A helical transmembrane segment spans residues 99–115 (DIFFGIFTPVIIFNVAF). At 116-125 (DMDIYMLQKL) the chain is on the cytoplasmic side. The helical transmembrane segment at 126 to 151 (FWQILVITIPGFLINYTLILWYLQSV) threads the bilayer. A transport core domain region spans residues 126–213 (FWQILVITIP…SLVIYSGVVH (88 aa)). Topologically, residues 152–157 (NKLSLK) are extracellular. The helical transmembrane segment at 158–183 (TVPWLLFSAVLISSDPMLTSASIRDL) threads the bilayer. Topologically, residues 184–186 (GLS) are cytoplasmic. Residues 187–212 (RSLTNLINGESLLTSVLSLVIYSGVV) form a helical membrane-spanning segment. The Extracellular portion of the chain corresponds to 213–225 (HIRFKSKSVNHTL). The chain crosses the membrane as a helical span at residues 226-257 (AHKVMSTAWSYIVESFITGIVFTKVIQLWMAT). At 258-261 (IFGD) the chain is on the cytoplasmic side. Residues 262-283 (DVNHITLIFSVLYLIFYVCELV) form a helical membrane-spanning segment. The Extracellular segment spans residues 284-286 (GMS). Residues 287 to 300 (GIFTLATIGLFLNS) traverse the membrane as a helical segment. The Cytoplasmic portion of the chain corresponds to 301-307 (TSFKPGV). A helical membrane pass occupies residues 308–339 (EAFLLEFWNCLSFIGFLMVFTFIGLLIPAHTY). The Extracellular portion of the chain corresponds to 340–344 (LHISF). The chain crosses the membrane as a helical span at residues 345–374 (SDVYYSLNIYFTLIVLRLLVFLLMSPILSR). Residues 345–446 (SDVYYSLNIY…FILPMAVTKL (102 aa)) form a transport core domain region. The Cytoplasmic segment spans residues 375–380 (LGHGFS). Residues 381–411 (WRWAFIMVWSEMKGTPNINMALLLAYSDISL) traverse the membrane as a helical segment. The Extracellular segment spans residues 412–415 (GSER). Residues 416–446 (ERSQILFHGVSVCVITLIVNRFILPMAVTKL) traverse the membrane as a helical segment. Residues 447–632 (GLRDVTSTKY…ACHRIVFTNE (186 aa)) are Cytoplasmic-facing. The tract at residues 618–698 (YMFLHACHRI…EFFSHTWLLF (81 aa)) is ion transport-like. A helical membrane pass occupies residues 633-653 (FEYTGYLVVLMSTYPMIICWI). The Extracellular segment spans residues 654–657 (SRLK). The chain crosses the membrane as a helical span at residues 658 to 684 (DIYDNEIKCANYYFLAFYILEALLKVA). Over 685–691 (AMRKEFF) the chain is Cytoplasmic. The chain crosses the membrane as a helical span at residues 692-716 (SHTWLLFELGITLVGVLDIILIETD). Residues 717–724 (SISYNFDL) lie on the Extracellular side of the membrane. A helical transmembrane segment spans residues 725 to 751 (TETVVFMNVIRLLRILRILKLVTPKLL). The Cytoplasmic segment spans residues 752-1175 (QIIDKRMSQQ…EELIEENINI (424 aa)). Positions 1137-1146 (MKPDSERESF) are enriched in basic and acidic residues. Residues 1137–1175 (MKPDSERESFETLDETSEEDNGKKENQENEELIEENINI) form a disordered region. A compositionally biased stretch (acidic residues) spans 1164–1175 (ENEELIEENINI).

The protein belongs to the monovalent cation:proton antiporter 1 (CPA1) transporter (TC 2.A.36) family. Interacts with soluble adenylyl cyclase (sAC). In terms of tissue distribution, testis-specific. Specifically present in the principal piece of sperm tail (at protein level).

Its subcellular location is the cell projection. It is found in the cilium. The protein localises to the flagellum membrane. Its function is as follows. Sperm-specific solute carrier involved in intracellular pH regulation of spermatozoa. Required for sperm motility and fertility. Involved in sperm cell hyperactivation, a step needed for sperm motility which is essential late in the preparation of sperm for fertilization. Required for the expression and bicarbonate regulation of the soluble adenylyl cyclase (sAC). The protein is Solute carrier family 9 member C1 (Slc9c1) of Mus musculus (Mouse).